Here is a 388-residue protein sequence, read N- to C-terminus: Probable proton-coupled zinc antiporter SLC30A3 (388 aa).

The segment at 1–42 (MEPSPASGGSETTRLVSPRDRSSAGGGLRLKSLFTEPSEPLP) is disordered. At 1-75 (MEPSPASGGS…SPERAQARRQ (75 aa)) the chain is on the cytoplasmic side. Residues S63 and S66 each carry the phosphoserine modification. Residues 76–96 (LYAACVVCFIFMAGEVVGGYL) form a helical membrane-spanning segment. At 97–105 (AHSLAIMTD) the chain is on the lumenal side. A helical transmembrane segment spans residues 106–126 (AAHLLADIGSMMASLFSLWLS). Zn(2+) contacts are provided by H108 and D112. The Cytoplasmic portion of the chain corresponds to 127–145 (TRPATRTMTFGWHRSETLG). Residues 146–166 (ALASVVSLWIVTGILLYLAFL) form a helical membrane-spanning segment. Residues 167–177 (RLLHSDYHIEA) are Lumenal-facing. The chain crosses the membrane as a helical span at residues 178–198 (GAMLLTASIAVCANMIMAFVL). The Cytoplasmic portion of the chain corresponds to 199-235 (HQTGAPHSHGPRGAEYAPLEEGHGHPLSLGNTSVRAA). The chain crosses the membrane as a helical span at residues 236-256 (FVHVLGDLLQSLGVLAASILI). Residues H238 and D242 each coordinate Zn(2+). Over 257-263 (YFKPQYK) the chain is Lumenal. A helical transmembrane segment spans residues 264 to 284 (VADPISTFLFSICALGSTAPT). Topologically, residues 285 to 388 (LRDVLLVLME…CLRCREPPKA (104 aa)) are cytoplasmic.

This sequence belongs to the cation diffusion facilitator (CDF) transporter (TC 2.A.4) family. SLC30A subfamily. In terms of assembly, homodimer. Homodimerization could regulate efficiency of zinc transport. Interacts with TMEM163.

It is found in the cytoplasmic vesicle. The protein resides in the secretory vesicle. The protein localises to the synaptic vesicle membrane. Its subcellular location is the synapse. It localises to the synaptosome. It is found in the late endosome membrane. The protein resides in the lysosome membrane. It catalyses the reaction Zn(2+)(in) + 2 H(+)(out) = Zn(2+)(out) + 2 H(+)(in). Its function is as follows. Probable proton-coupled zinc ion antiporter mediating the import of zinc from cytoplasm into synaptic vesicles and participating to cellular zinc ion homeostasis in the brain. The sequence is that of Probable proton-coupled zinc antiporter SLC30A3 from Rattus norvegicus (Rat).